A 270-amino-acid chain; its full sequence is Tryptophan synthase alpha chain (270 aa).

Residues Glu-49 and Asp-60 each act as proton acceptor in the active site.

The protein belongs to the TrpA family. In terms of assembly, tetramer of two alpha and two beta chains.

The catalysed reaction is (1S,2R)-1-C-(indol-3-yl)glycerol 3-phosphate + L-serine = D-glyceraldehyde 3-phosphate + L-tryptophan + H2O. Its pathway is amino-acid biosynthesis; L-tryptophan biosynthesis; L-tryptophan from chorismate: step 5/5. Its function is as follows. The alpha subunit is responsible for the aldol cleavage of indoleglycerol phosphate to indole and glyceraldehyde 3-phosphate. This is Tryptophan synthase alpha chain from Pseudomonas fluorescens (strain ATCC BAA-477 / NRRL B-23932 / Pf-5).